The following is a 133-amino-acid chain: MAQPLDFLLVSICLFHSLFSFQVEDYYAPTIESLIRNPETEDGACVFPFLYRSEIFYDCVNFNLKHKWCSLNKTYQGYWKYCALSDYAPCAFPFWYRHMIYWDCTEDGEVFGKKWCSLTPNYNKDQVWKYCIE.

The signal sequence occupies residues Met-1–Ser-20. 2 consecutive Fibronectin type-II domains span residues Thr-40 to Leu-84 and Ser-85 to Glu-133. 4 disulfides stabilise this stretch: Cys-45/Cys-69, Cys-59/Cys-82, Cys-90/Cys-116, and Cys-104/Cys-131. Residue Asn-72 is glycosylated (N-linked (GlcNAc...) asparagine).

The protein belongs to the seminal plasma protein family. Expressed only in the epididymis.

The protein resides in the secreted. In terms of biological role, binds sperm in vitro and promotes sperm capacitation. Specifically promotes capacitation induced by high density lipoproteins (HDLs). Also binds heparin, phospholipid liposomes, and weakly to gelatin. Does not bind chondroitin sulfate B. The sequence is that of Binder of sperm protein homolog 1 (Bsph1) from Mus musculus (Mouse).